The following is a 124-amino-acid chain: MADLAKIVEDLSALTVLEAAELSKLLEEKWGVSAAAPVAVAAAGGAAPAAAAEEKTEFDVVLADGGANKINVIKEVRALTGLGLKEAKDLVEGAPKAVKEGASKDEAEKIKAQLEAAGAKVELK.

Belongs to the bacterial ribosomal protein bL12 family. Homodimer. Part of the ribosomal stalk of the 50S ribosomal subunit. Forms a multimeric L10(L12)X complex, where L10 forms an elongated spine to which 2 to 4 L12 dimers bind in a sequential fashion. Binds GTP-bound translation factors.

Forms part of the ribosomal stalk which helps the ribosome interact with GTP-bound translation factors. Is thus essential for accurate translation. This Brucella abortus (strain S19) protein is Large ribosomal subunit protein bL12.